Consider the following 883-residue polypeptide: Protein SEY1 homolog (883 aa).

Residues 1 to 795 (MQMDRKTQII…ETGGKMSLKN (795 aa)) lie on the Cytoplasmic side of the membrane. Residues 33–279 (GFNYNVVAIL…IPSDGFAHYC (247 aa)) form the GB1/RHD3-type G domain. A GTP-binding site is contributed by 43 to 50 (GSQSSGKS). A coiled-coil region spans residues 673-693 (LDEIMDVLKSKLDEISDNLSS). A helical transmembrane segment spans residues 796–816 (VPLFFWVILLILGWNELLFFI). Residues 817–819 (RFF) are Lumenal-facing. A helical membrane pass occupies residues 820–840 (FRLNIILPLFLAAAVILSTLF). The Cytoplasmic segment spans residues 841–883 (FNGNMEVLSTINKVVFFLAKSSFGFYRQLQTMGEKVAQVPTAD).

It belongs to the TRAFAC class dynamin-like GTPase superfamily. GB1/RHD3 GTPase family. RHD3 subfamily.

Its subcellular location is the endoplasmic reticulum membrane. Its function is as follows. Probable GTP-binding protein involved in generating and maintaining the structure of the tubular endoplasmic reticulum network. This is Protein SEY1 homolog from Plasmodium knowlesi (strain H).